A 200-amino-acid polypeptide reads, in one-letter code: Ribonuclease HII (200 aa).

The RNase H type-2 domain maps to 1–200 (MRYGGVDEAG…EINKKLTDFI (200 aa)). 3 residues coordinate a divalent metal cation: D7, E8, and D99.

This sequence belongs to the RNase HII family. The cofactor is Mn(2+). It depends on Mg(2+) as a cofactor.

It is found in the cytoplasm. The catalysed reaction is Endonucleolytic cleavage to 5'-phosphomonoester.. Endonuclease that specifically degrades the RNA of RNA-DNA hybrids. This chain is Ribonuclease HII, found in Nanoarchaeum equitans (strain Kin4-M).